Here is a 218-residue protein sequence, read N- to C-terminus: N-(5'-phosphoribosyl)anthranilate isomerase (218 aa).

This sequence belongs to the TrpF family.

It catalyses the reaction N-(5-phospho-beta-D-ribosyl)anthranilate = 1-(2-carboxyphenylamino)-1-deoxy-D-ribulose 5-phosphate. It participates in amino-acid biosynthesis; L-tryptophan biosynthesis; L-tryptophan from chorismate: step 3/5. This chain is N-(5'-phosphoribosyl)anthranilate isomerase, found in Chelativorans sp. (strain BNC1).